Reading from the N-terminus, the 121-residue chain is Large ribosomal subunit protein uL14c (121 aa).

The protein belongs to the universal ribosomal protein uL14 family. In terms of assembly, part of the 50S ribosomal subunit.

It localises to the plastid. The protein resides in the chloroplast. In terms of biological role, binds to 23S rRNA. This chain is Large ribosomal subunit protein uL14c, found in Euglena gracilis.